A 349-amino-acid polypeptide reads, in one-letter code: Ureidoglycolate dehydrogenase (NAD(+)) (349 aa).

H116 serves as the catalytic Proton acceptor. NAD(+)-binding positions include S140, 174–176 (DMA), K224, and 306–308 (GQD).

This sequence belongs to the LDH2/MDH2 oxidoreductase family. In terms of assembly, homodimer.

The protein resides in the cytoplasm. The enzyme catalyses (S)-ureidoglycolate + NAD(+) = N-carbamoyl-2-oxoglycine + NADH + H(+). It participates in nitrogen metabolism; (S)-allantoin degradation; oxalurate from (S)-ureidoglycolate: step 1/1. In terms of biological role, allD plays a pivotal role as a metabolic branch-point enzyme in nitrogen utilization via the assimilation of allantoin. It is able to utilize allantoin as a sole source of nitrogen under anaerobic conditions. Catalyzes the oxidation of ureidoglycolate to oxalurate. The sequence is that of Ureidoglycolate dehydrogenase (NAD(+)) from Escherichia coli O157:H7.